The chain runs to 677 residues: UvrABC system protein B (677 aa).

The region spanning glutamate 24–arginine 412 is the Helicase ATP-binding domain. Glycine 37–threonine 44 contributes to the ATP binding site. The Beta-hairpin motif lies at tyrosine 90–isoleucine 113. A Helicase C-terminal domain is found at glutamine 429–arginine 591. The UVR domain maps to glutamate 636 to leucine 671.

Belongs to the UvrB family. Forms a heterotetramer with UvrA during the search for lesions. Interacts with UvrC in an incision complex.

The protein localises to the cytoplasm. Its function is as follows. The UvrABC repair system catalyzes the recognition and processing of DNA lesions. A damage recognition complex composed of 2 UvrA and 2 UvrB subunits scans DNA for abnormalities. Upon binding of the UvrA(2)B(2) complex to a putative damaged site, the DNA wraps around one UvrB monomer. DNA wrap is dependent on ATP binding by UvrB and probably causes local melting of the DNA helix, facilitating insertion of UvrB beta-hairpin between the DNA strands. Then UvrB probes one DNA strand for the presence of a lesion. If a lesion is found the UvrA subunits dissociate and the UvrB-DNA preincision complex is formed. This complex is subsequently bound by UvrC and the second UvrB is released. If no lesion is found, the DNA wraps around the other UvrB subunit that will check the other stand for damage. The protein is UvrABC system protein B of Bacteroides thetaiotaomicron (strain ATCC 29148 / DSM 2079 / JCM 5827 / CCUG 10774 / NCTC 10582 / VPI-5482 / E50).